We begin with the raw amino-acid sequence, 148 residues long: Large ribosomal subunit protein uL15B (148 aa).

Basic residues-rich tracts occupy residues 1 to 13 (MPTHTSKTRKLRG) and 21 to 31 (RIGKHRKHPGG). The tract at residues 1 to 38 (MPTHTSKTRKLRGHVSAGHGRIGKHRKHPGGRGKAGGL) is disordered. Phosphotyrosine is present on Y108.

It belongs to the universal ribosomal protein uL15 family. As to quaternary structure, component of the large ribosomal subunit (LSU). Mature yeast ribosomes consist of a small (40S) and a large (60S) subunit. The 40S small subunit contains 1 molecule of ribosomal RNA (18S rRNA) and at least 33 different proteins. The large 60S subunit contains 3 rRNA molecules (25S, 5.8S and 5S rRNA) and at least 46 different proteins.

The protein localises to the cytoplasm. Its subcellular location is the nucleus. It localises to the nucleolus. In terms of biological role, component of the ribosome, a large ribonucleoprotein complex responsible for the synthesis of proteins in the cell. The small ribosomal subunit (SSU) binds messenger RNAs (mRNAs) and translates the encoded message by selecting cognate aminoacyl-transfer RNA (tRNA) molecules. The large subunit (LSU) contains the ribosomal catalytic site termed the peptidyl transferase center (PTC), which catalyzes the formation of peptide bonds, thereby polymerizing the amino acids delivered by tRNAs into a polypeptide chain. The nascent polypeptides leave the ribosome through a tunnel in the LSU and interact with protein factors that function in enzymatic processing, targeting, and the membrane insertion of nascent chains at the exit of the ribosomal tunnel. This chain is Large ribosomal subunit protein uL15B (rpl2801), found in Schizosaccharomyces pombe (strain 972 / ATCC 24843) (Fission yeast).